The following is a 210-amino-acid chain: Thymidylate kinase (210 aa).

Residue Gly-11–Ser-18 participates in ATP binding.

This sequence belongs to the thymidylate kinase family.

It carries out the reaction dTMP + ATP = dTDP + ADP. Phosphorylation of dTMP to form dTDP in both de novo and salvage pathways of dTTP synthesis. The protein is Thymidylate kinase of Vibrio campbellii (strain ATCC BAA-1116).